A 212-amino-acid polypeptide reads, in one-letter code: Ribonuclease HII (212 aa).

Positions 17 to 211 constitute an RNase H type-2 domain; that stretch reads ANLAGIDEAG…VIEALLSLEQ (195 aa). The a divalent metal cation site is built by Asp-23, Glu-24, and Asp-120.

Belongs to the RNase HII family. Mn(2+) serves as cofactor. Requires Mg(2+) as cofactor.

It is found in the cytoplasm. It catalyses the reaction Endonucleolytic cleavage to 5'-phosphomonoester.. Its function is as follows. Endonuclease that specifically degrades the RNA of RNA-DNA hybrids. In Chloroflexus aurantiacus (strain ATCC 29364 / DSM 637 / Y-400-fl), this protein is Ribonuclease HII.